Consider the following 371-residue polypeptide: UDP-N-acetylglucosamine--N-acetylmuramyl-(pentapeptide) pyrophosphoryl-undecaprenol N-acetylglucosamine transferase (371 aa).

UDP-N-acetyl-alpha-D-glucosamine-binding positions include 10–12 (TGG), N124, R165, S191, I246, and Q291.

The protein belongs to the glycosyltransferase 28 family. MurG subfamily.

It localises to the cell inner membrane. It catalyses the reaction di-trans,octa-cis-undecaprenyl diphospho-N-acetyl-alpha-D-muramoyl-L-alanyl-D-glutamyl-meso-2,6-diaminopimeloyl-D-alanyl-D-alanine + UDP-N-acetyl-alpha-D-glucosamine = di-trans,octa-cis-undecaprenyl diphospho-[N-acetyl-alpha-D-glucosaminyl-(1-&gt;4)]-N-acetyl-alpha-D-muramoyl-L-alanyl-D-glutamyl-meso-2,6-diaminopimeloyl-D-alanyl-D-alanine + UDP + H(+). The protein operates within cell wall biogenesis; peptidoglycan biosynthesis. Functionally, cell wall formation. Catalyzes the transfer of a GlcNAc subunit on undecaprenyl-pyrophosphoryl-MurNAc-pentapeptide (lipid intermediate I) to form undecaprenyl-pyrophosphoryl-MurNAc-(pentapeptide)GlcNAc (lipid intermediate II). The chain is UDP-N-acetylglucosamine--N-acetylmuramyl-(pentapeptide) pyrophosphoryl-undecaprenol N-acetylglucosamine transferase from Geobacter sp. (strain M21).